The chain runs to 102 residues: Small ribosomal subunit protein uS10 (102 aa).

It belongs to the universal ribosomal protein uS10 family. In terms of assembly, part of the 30S ribosomal subunit.

Functionally, involved in the binding of tRNA to the ribosomes. This Methylorubrum populi (strain ATCC BAA-705 / NCIMB 13946 / BJ001) (Methylobacterium populi) protein is Small ribosomal subunit protein uS10.